We begin with the raw amino-acid sequence, 170 residues long: Protein SprT (170 aa).

In terms of domain architecture, SprT-like spans 22–163; that stretch reads LQQANLTLQT…RCRRCGKTLR (142 aa). Residue His78 participates in Zn(2+) binding. The active site involves Glu79. Residue His82 coordinates Zn(2+).

This sequence belongs to the SprT family. The cofactor is Zn(2+).

Its subcellular location is the cytoplasm. The chain is Protein SprT from Pectobacterium carotovorum subsp. carotovorum (strain PC1).